Reading from the N-terminus, the 201-residue chain is Holliday junction branch migration complex subunit RuvA (201 aa).

Positions 1–63 (MIAFVSGTVA…EDSLTLYGFA (63 aa)) are domain I. Positions 64–139 (DDDERQVFEL…RLGEPIGAPA (76 aa)) are domain II. Residues 139-143 (AVGAP) form a flexible linker region. The domain III stretch occupies residues 144–201 (VSTGWRDQLHAALIGLGYATREADEAVSAVAPQAEAAGGTPQVGALLKAALQTLNRAR).

It belongs to the RuvA family. As to quaternary structure, homotetramer. Forms an RuvA(8)-RuvB(12)-Holliday junction (HJ) complex. HJ DNA is sandwiched between 2 RuvA tetramers; dsDNA enters through RuvA and exits via RuvB. An RuvB hexamer assembles on each DNA strand where it exits the tetramer. Each RuvB hexamer is contacted by two RuvA subunits (via domain III) on 2 adjacent RuvB subunits; this complex drives branch migration. In the full resolvosome a probable DNA-RuvA(4)-RuvB(12)-RuvC(2) complex forms which resolves the HJ.

Its subcellular location is the cytoplasm. The RuvA-RuvB-RuvC complex processes Holliday junction (HJ) DNA during genetic recombination and DNA repair, while the RuvA-RuvB complex plays an important role in the rescue of blocked DNA replication forks via replication fork reversal (RFR). RuvA specifically binds to HJ cruciform DNA, conferring on it an open structure. The RuvB hexamer acts as an ATP-dependent pump, pulling dsDNA into and through the RuvAB complex. HJ branch migration allows RuvC to scan DNA until it finds its consensus sequence, where it cleaves and resolves the cruciform DNA. This chain is Holliday junction branch migration complex subunit RuvA, found in Streptomyces coelicolor (strain ATCC BAA-471 / A3(2) / M145).